The sequence spans 200 residues: ATP-dependent Clp protease proteolytic subunit (200 aa).

The active-site Nucleophile is the Ser-96. The active site involves His-121.

Belongs to the peptidase S14 family. Fourteen ClpP subunits assemble into 2 heptameric rings which stack back to back to give a disk-like structure with a central cavity, resembling the structure of eukaryotic proteasomes.

It is found in the cytoplasm. It catalyses the reaction Hydrolysis of proteins to small peptides in the presence of ATP and magnesium. alpha-casein is the usual test substrate. In the absence of ATP, only oligopeptides shorter than five residues are hydrolyzed (such as succinyl-Leu-Tyr-|-NHMec, and Leu-Tyr-Leu-|-Tyr-Trp, in which cleavage of the -Tyr-|-Leu- and -Tyr-|-Trp bonds also occurs).. In terms of biological role, cleaves peptides in various proteins in a process that requires ATP hydrolysis. Has a chymotrypsin-like activity. Plays a major role in the degradation of misfolded proteins. This is ATP-dependent Clp protease proteolytic subunit from Leuconostoc citreum (strain KM20).